The following is a 443-amino-acid chain: Serine/threonine-protein phosphatase 2A 55 kDa regulatory subunit B beta isoform (443 aa).

7 WD repeats span residues 22-61 (TEAD…KNQP), 87-128 (EIEE…KRPE), 171-209 (AHTY…RSFN), 220-260 (ELTE…LCDR), 279-317 (EIIS…RPIE), 334-375 (ENDC…DVTL), and 410-443 (DFSK…DKVN).

This sequence belongs to the phosphatase 2A regulatory subunit B family. PP2A consists of a common heterodimeric core enzyme, composed of a 36 kDa catalytic subunit (subunit C) and a 65 kDa constant regulatory subunit (PR65 or subunit A), that associates with a variety of regulatory subunits.

Its subcellular location is the cytoplasm. The protein resides in the cytoskeleton. It is found in the membrane. The B regulatory subunit might modulate substrate selectivity and catalytic activity, and might also direct the localization of the catalytic enzyme to a particular subcellular compartment. Negatively controls the initiation of oocyte maturation. This chain is Serine/threonine-protein phosphatase 2A 55 kDa regulatory subunit B beta isoform (ppp2r2b), found in Xenopus tropicalis (Western clawed frog).